The primary structure comprises 386 residues: Putative 8-amino-7-oxononanoate synthase (386 aa).

Residue Arg26 participates in substrate binding. Pyridoxal 5'-phosphate is bound at residue 113-114; sequence GY. His138 lines the substrate pocket. Pyridoxal 5'-phosphate contacts are provided by residues Ser186, 211-214, and 240-243; these read DDAH and TLSK. Position 243 is an N6-(pyridoxal phosphate)lysine (Lys243). Thr352 is a substrate binding site.

This sequence belongs to the class-II pyridoxal-phosphate-dependent aminotransferase family. BioF subfamily. As to quaternary structure, homodimer. Pyridoxal 5'-phosphate is required as a cofactor.

It catalyses the reaction 6-carboxyhexanoyl-[ACP] + L-alanine + H(+) = (8S)-8-amino-7-oxononanoate + holo-[ACP] + CO2. It functions in the pathway cofactor biosynthesis; biotin biosynthesis. Functionally, catalyzes the decarboxylative condensation of pimeloyl-[acyl-carrier protein] and L-alanine to produce 8-amino-7-oxononanoate (AON), [acyl-carrier protein], and carbon dioxide. The polypeptide is Putative 8-amino-7-oxononanoate synthase (bioF) (Phenylobacterium zucineum (strain HLK1)).